We begin with the raw amino-acid sequence, 441 residues long: uncharacterized protein (441 aa).

57 to 64 contacts ATP; it reads GVRRGGKT.

This is an uncharacterized protein from Methanocaldococcus jannaschii (strain ATCC 43067 / DSM 2661 / JAL-1 / JCM 10045 / NBRC 100440) (Methanococcus jannaschii).